An 876-amino-acid polypeptide reads, in one-letter code: Valine--tRNA ligase (876 aa).

The 'HIGH' region signature appears at 44–54; it reads PNVTGKLHLGH. The 'KMSKS' region signature appears at 520-524; it reads KMSKS. Lys523 contacts ATP. A coiled-coil region spans residues 805-876; sequence LEGLIDMDKE…VKNRIEQLKA (72 aa).

It belongs to the class-I aminoacyl-tRNA synthetase family. ValS type 1 subfamily. As to quaternary structure, monomer.

The protein localises to the cytoplasm. It catalyses the reaction tRNA(Val) + L-valine + ATP = L-valyl-tRNA(Val) + AMP + diphosphate. Catalyzes the attachment of valine to tRNA(Val). As ValRS can inadvertently accommodate and process structurally similar amino acids such as threonine, to avoid such errors, it has a 'posttransfer' editing activity that hydrolyzes mischarged Thr-tRNA(Val) in a tRNA-dependent manner. The sequence is that of Valine--tRNA ligase from Staphylococcus haemolyticus (strain JCSC1435).